The chain runs to 608 residues: Glutamine--fructose-6-phosphate aminotransferase [isomerizing] (608 aa).

The active-site Nucleophile; for GATase activity is the cysteine 2. The Glutamine amidotransferase type-2 domain occupies 2–217 (CGIVGYIGDK…DHEIAIIKKD (216 aa)). 2 consecutive SIS domains span residues 285–424 (TKED…KKGT) and 453–598 (VIQK…VDKP). The active-site For Fru-6P isomerization activity is lysine 603.

As to quaternary structure, homodimer.

It localises to the cytoplasm. The enzyme catalyses D-fructose 6-phosphate + L-glutamine = D-glucosamine 6-phosphate + L-glutamate. Functionally, catalyzes the first step in hexosamine metabolism, converting fructose-6P into glucosamine-6P using glutamine as a nitrogen source. The chain is Glutamine--fructose-6-phosphate aminotransferase [isomerizing] from Caldanaerobacter subterraneus subsp. tengcongensis (strain DSM 15242 / JCM 11007 / NBRC 100824 / MB4) (Thermoanaerobacter tengcongensis).